We begin with the raw amino-acid sequence, 116 residues long: Ribosome-binding factor A (116 aa).

The protein belongs to the RbfA family. In terms of assembly, monomer. Binds 30S ribosomal subunits, but not 50S ribosomal subunits or 70S ribosomes.

Its subcellular location is the cytoplasm. Functionally, one of several proteins that assist in the late maturation steps of the functional core of the 30S ribosomal subunit. Associates with free 30S ribosomal subunits (but not with 30S subunits that are part of 70S ribosomes or polysomes). Required for efficient processing of 16S rRNA. May interact with the 5'-terminal helix region of 16S rRNA. This chain is Ribosome-binding factor A, found in Buchnera aphidicola subsp. Cinara cedri (strain Cc).